A 123-amino-acid chain; its full sequence is Ribonuclease P protein component (123 aa).

This sequence belongs to the RnpA family. Consists of a catalytic RNA component (M1 or rnpB) and a protein subunit.

The enzyme catalyses Endonucleolytic cleavage of RNA, removing 5'-extranucleotides from tRNA precursor.. Its function is as follows. RNaseP catalyzes the removal of the 5'-leader sequence from pre-tRNA to produce the mature 5'-terminus. It can also cleave other RNA substrates such as 4.5S RNA. The protein component plays an auxiliary but essential role in vivo by binding to the 5'-leader sequence and broadening the substrate specificity of the ribozyme. This chain is Ribonuclease P protein component, found in Streptococcus pneumoniae (strain JJA).